The following is an 89-amino-acid chain: Small ribosomal subunit protein uS15 (89 aa).

The protein belongs to the universal ribosomal protein uS15 family. In terms of assembly, part of the 30S ribosomal subunit. Forms a bridge to the 50S subunit in the 70S ribosome, contacting the 23S rRNA.

Its function is as follows. One of the primary rRNA binding proteins, it binds directly to 16S rRNA where it helps nucleate assembly of the platform of the 30S subunit by binding and bridging several RNA helices of the 16S rRNA. Forms an intersubunit bridge (bridge B4) with the 23S rRNA of the 50S subunit in the ribosome. The sequence is that of Small ribosomal subunit protein uS15 from Bartonella henselae (strain ATCC 49882 / DSM 28221 / CCUG 30454 / Houston 1) (Rochalimaea henselae).